Reading from the N-terminus, the 568-residue chain is Urease subunit alpha (568 aa).

Residues 130 to 568 (GGIDTHIHFI…LPMAQRYFLF (439 aa)) enclose the Urease domain. 3 residues coordinate Ni(2+): H135, H137, and K218. K218 carries the post-translational modification N6-carboxylysine. H220 lines the substrate pocket. Residues H247 and H273 each contribute to the Ni(2+) site. Residue H321 is the Proton donor of the active site. A Ni(2+)-binding site is contributed by D361.

Belongs to the metallo-dependent hydrolases superfamily. Urease alpha subunit family. In terms of assembly, heterotrimer of UreA (gamma), UreB (beta) and UreC (alpha) subunits. Three heterotrimers associate to form the active enzyme. Ni cation serves as cofactor. Carboxylation allows a single lysine to coordinate two nickel ions.

It is found in the cytoplasm. The enzyme catalyses urea + 2 H2O + H(+) = hydrogencarbonate + 2 NH4(+). It functions in the pathway nitrogen metabolism; urea degradation; CO(2) and NH(3) from urea (urease route): step 1/1. The protein is Urease subunit alpha of Burkholderia mallei (strain NCTC 10247).